We begin with the raw amino-acid sequence, 238 residues long: Tetraspanin-8 (238 aa).

Over 1 to 9 the chain is Cytoplasmic; sequence MAGVNVCIK. A helical membrane pass occupies residues 10-33; it reads CSMFIFNFVFWLCGAIILSVAISI. Over 34-57 the chain is Extracellular; sequence RAGKIGQEILAPGDADLNLFIAVN. Residues 58-72 form a helical membrane-spanning segment; sequence ILIFVGAVIMILGFL. Over 73-83 the chain is Cytoplasmic; that stretch reads GCCGAMKENQF. A helical transmembrane segment spans residues 84–109; that stretch reads MMILFFVGLLMILLLQVAAGIVATTR. The Extracellular portion of the chain corresponds to 110 to 206; the sequence is KSKTEQALNK…ASISQMFSKR (97 aa). An N-linked (GlcNAc...) asparagine glycan is attached at asparagine 118. Residues 207 to 231 form a helical membrane-spanning segment; that stretch reads LFIVLALAFGLAAIEVLGLIFSIVL. The Cytoplasmic portion of the chain corresponds to 232 to 238; that stretch reads YCQMRKK.

This sequence belongs to the tetraspanin (TM4SF) family. Forms homooligomers. Interacts with MEP1B. Interacts with integrin alpha3/ITGA3. Interacts with RICTOR and MTOR. Interacts with ADAM17. Interacts with ECE1.

It is found in the cell membrane. Its function is as follows. Structural component of specialized membrane microdomains known as tetraspanin-enriched microdomains (TERMs), which act as platforms for receptor clustering and signaling. Participates thereby in diverse biological functions such as cell signal transduction, migration and protein trafficking. Promotes ADAM17-mediated TNF-alpha processing through recruitment of ADAM17 to tetraspanin-enriched micro-domains (TEMs). Forms a complex with RICTOR and integrin alpha3/ITGA3 to mediate mTORC2 activation and AKT1 phosphorylation leading to cell migration. Reduces apoptosis and autophagy induced by high glucose levels through forming a complex with mTOR and RICTOR. Contributes to the maintenance of intestinal epithelial barrier and plays a role in the regulation of intestine inflammation by switching interferon gamma receptor 1/IFNGR1 from clathrin-dependent to lipid raft-dependent endocytosis route to limit STAT1 activation magnitude and duration. Acts as a modulator of the endothelin axis by associating with endothelin converting enzyme ECE1 and regulating its activity of conversion of the endothelin-1 precursor to endothelin. The chain is Tetraspanin-8 (TSPAN8) from Bos taurus (Bovine).